Here is a 422-residue protein sequence, read N- to C-terminus: Lipoyl synthase, mitochondrial (422 aa).

The transit peptide at 1–34 directs the protein to the mitochondrion; sequence MAASSTRLRCLYASSAPAWKKSPSQSIISLSRHY. Residues 37–48 are compositionally biased toward polar residues; it reads TSSTTPSLNPDE. The segment at 37–70 is disordered; that stretch reads TSSTTPSLNPDESSSSSSSTIPKRRKTTTFRDKL. [4Fe-4S] cluster contacts are provided by cysteine 146, cysteine 151, cysteine 157, cysteine 177, cysteine 181, cysteine 184, and serine 383. A Radical SAM core domain is found at 160 to 372; sequence GSDKSAATAT…RQRALEMGFL (213 aa).

It belongs to the radical SAM superfamily. Lipoyl synthase family. [4Fe-4S] cluster is required as a cofactor.

It localises to the mitochondrion. The enzyme catalyses [[Fe-S] cluster scaffold protein carrying a second [4Fe-4S](2+) cluster] + N(6)-octanoyl-L-lysyl-[protein] + 2 oxidized [2Fe-2S]-[ferredoxin] + 2 S-adenosyl-L-methionine + 4 H(+) = [[Fe-S] cluster scaffold protein] + N(6)-[(R)-dihydrolipoyl]-L-lysyl-[protein] + 4 Fe(3+) + 2 hydrogen sulfide + 2 5'-deoxyadenosine + 2 L-methionine + 2 reduced [2Fe-2S]-[ferredoxin]. It participates in protein modification; protein lipoylation via endogenous pathway; protein N(6)-(lipoyl)lysine from octanoyl-[acyl-carrier-protein]: step 2/2. Functionally, catalyzes the radical-mediated insertion of two sulfur atoms into the C-6 and C-8 positions of the octanoyl moiety bound to the lipoyl domains of lipoate-dependent enzymes, thereby converting the octanoylated domains into lipoylated derivatives. This is Lipoyl synthase, mitochondrial from Talaromyces stipitatus (strain ATCC 10500 / CBS 375.48 / QM 6759 / NRRL 1006) (Penicillium stipitatum).